A 191-amino-acid polypeptide reads, in one-letter code: uncharacterized protein (191 aa).

Transmembrane regions (helical) follow at residues 12 to 32 (FAFL…FFTL), 48 to 68 (LVAL…LTLF), 92 to 112 (YISV…LLSL), and 168 to 188 (IFCL…SCAF).

It localises to the membrane. This is an uncharacterized protein from Saccharomyces cerevisiae (strain ATCC 204508 / S288c) (Baker's yeast).